We begin with the raw amino-acid sequence, 396 residues long: Elongation factor Tu (396 aa).

Residues 10–205 enclose the tr-type G domain; that stretch reads KPHVNIGTIG…AVDESIPDPV (196 aa). Residues 19–26 are G1; the sequence is GHVDHGKT. 19-26 is a GTP binding site; sequence GHVDHGKT. T26 is a binding site for Mg(2+). Residues 62–66 are G2; the sequence is GITIN. The G3 stretch occupies residues 83–86; the sequence is DAPG. GTP is bound by residues 83 to 87 and 138 to 141; these read DAPGH and NKAD. A G4 region spans residues 138-141; the sequence is NKAD. The interval 175 to 177 is G5; it reads SAL.

It belongs to the TRAFAC class translation factor GTPase superfamily. Classic translation factor GTPase family. EF-Tu/EF-1A subfamily. Monomer.

The protein localises to the cytoplasm. The catalysed reaction is GTP + H2O = GDP + phosphate + H(+). In terms of biological role, GTP hydrolase that promotes the GTP-dependent binding of aminoacyl-tRNA to the A-site of ribosomes during protein biosynthesis. The polypeptide is Elongation factor Tu (Mycolicibacterium gilvum (strain PYR-GCK) (Mycobacterium gilvum (strain PYR-GCK))).